We begin with the raw amino-acid sequence, 80 residues long: Bacteriochlorophyll c-binding protein (80 aa).

His25 contacts a bacteriochlorophyll c. Residues 49–80 are disordered; the sequence is PGVSRSGSGEGAFSSSPSNGFRPKRIRSRFNR. A propeptide spanning residues 54 to 80 is cleaved from the precursor; it reads SGSGEGAFSSSPSNGFRPKRIRSRFNR. The span at 70–80 shows a compositional bias: basic residues; sequence RPKRIRSRFNR.

This sequence belongs to the BChl C/E-binding protein family.

It localises to the chlorosome. Its subcellular location is the chlorosome envelope. Component of the photosynthetic apparatus. The light harvesting B740 complex binds bacteriochlorophyll c. This chain is Bacteriochlorophyll c-binding protein (cmsA), found in Chloroflexus aurantiacus (strain ATCC 29366 / DSM 635 / J-10-fl).